Consider the following 104-residue polypeptide: UPF0145 protein VIBHAR_02090 (104 aa).

The protein belongs to the UPF0145 family.

The chain is UPF0145 protein VIBHAR_02090 from Vibrio campbellii (strain ATCC BAA-1116).